The following is a 160-amino-acid chain: D-aminoacyl-tRNA deacylase (160 aa).

A Gly-cisPro motif, important for rejection of L-amino acids motif is present at residues 137 to 138 (GP).

This sequence belongs to the DTD family. In terms of assembly, homodimer.

It localises to the cytoplasm. It carries out the reaction glycyl-tRNA(Ala) + H2O = tRNA(Ala) + glycine + H(+). It catalyses the reaction a D-aminoacyl-tRNA + H2O = a tRNA + a D-alpha-amino acid + H(+). Functionally, an aminoacyl-tRNA editing enzyme that deacylates mischarged D-aminoacyl-tRNAs. Also deacylates mischarged glycyl-tRNA(Ala), protecting cells against glycine mischarging by AlaRS. Acts via tRNA-based rather than protein-based catalysis; rejects L-amino acids rather than detecting D-amino acids in the active site. By recycling D-aminoacyl-tRNA to D-amino acids and free tRNA molecules, this enzyme counteracts the toxicity associated with the formation of D-aminoacyl-tRNA entities in vivo and helps enforce protein L-homochirality. This Chloroflexus aurantiacus (strain ATCC 29364 / DSM 637 / Y-400-fl) protein is D-aminoacyl-tRNA deacylase.